Here is a 603-residue protein sequence, read N- to C-terminus: DNA mismatch repair protein MutL (603 aa).

Belongs to the DNA mismatch repair MutL/HexB family.

Functionally, this protein is involved in the repair of mismatches in DNA. It is required for dam-dependent methyl-directed DNA mismatch repair. May act as a 'molecular matchmaker', a protein that promotes the formation of a stable complex between two or more DNA-binding proteins in an ATP-dependent manner without itself being part of a final effector complex. The polypeptide is DNA mismatch repair protein MutL (Nitrobacter hamburgensis (strain DSM 10229 / NCIMB 13809 / X14)).